Here is a 129-residue protein sequence, read N- to C-terminus: Ribulose bisphosphate carboxylase small subunit (129 aa).

The segment at 109 to 129 (LRMTRTESNGRSQHYMWETQR) is disordered.

The protein belongs to the RuBisCO small chain family. In terms of assembly, heterohexadecamer of 8 large and 8 small subunits.

RuBisCO catalyzes two reactions: the carboxylation of D-ribulose 1,5-bisphosphate, the primary event in carbon dioxide fixation, as well as the oxidative fragmentation of the pentose substrate. Both reactions occur simultaneously and in competition at the same active site. Although the small subunit is not catalytic it is essential for maximal activity. The polypeptide is Ribulose bisphosphate carboxylase small subunit (Rhizobium meliloti (strain 1021) (Ensifer meliloti)).